The chain runs to 167 residues: Phospholipase A2 (167 aa).

Trp38, Gly40, and Gly42 together coordinate Ca(2+). 5 disulfides stabilise this stretch: Cys39–Cys61, Cys60–Cys99, Cys67–Cys92, Cys90–Cys127, and Cys132–Cys144. Asn47 carries an N-linked (GlcNAc...) asparagine glycan. The active site involves His64. Asp65 contributes to the Ca(2+) binding site. The propeptide occupies 136 to 140 (ARSAR).

The protein belongs to the phospholipase A2 family. Group III subfamily. In terms of assembly, heterodimer composed of a large subunit and a small subunit; disulfide-linked. Ca(2+) is required as a cofactor. Expressed by the venom gland.

The protein resides in the secreted. The catalysed reaction is a 1,2-diacyl-sn-glycero-3-phosphocholine + H2O = a 1-acyl-sn-glycero-3-phosphocholine + a fatty acid + H(+). Phospholipase toxin, which catalyzes the calcium-dependent hydrolysis of the 2-acyl groups in 3-sn-phosphoglycerides. Inhibits both skeletal (RYR1) and cardiac (RYR2) ryanodine receptors (calcium release channels). Probably blocks ryanodine receptors by generating a lipid product. Shows hemolytic activity, but it is not know if it is direct or indirect. The sequence is that of Phospholipase A2 from Hottentotta tamulus (Eastern Indian scorpion).